A 167-amino-acid polypeptide reads, in one-letter code: Protein-lysine myristoyltransferase RtxC (167 aa).

Active-site residues include H20 and D89.

Belongs to the RTX toxin acyltransferase family.

Its subcellular location is the cytoplasm. The catalysed reaction is tetradecanoyl-[ACP] + L-lysyl-[protein] = N(6)-tetradecanoyl-L-lysyl-[protein] + holo-[ACP] + H(+). Functionally, protein-lysine myristoyltransferase that catalyzes myristoylation of the protoxin (RtxA) at two internal lysine residues, thereby converting it to the active toxin. The protein is Protein-lysine myristoyltransferase RtxC of Kingella kingae.